Here is a 1375-residue protein sequence, read N- to C-terminus: DNA-directed RNA polymerase subunit beta (1375 aa).

The protein belongs to the RNA polymerase beta chain family. The RNAP catalytic core consists of 2 alpha, 1 beta, 1 beta' and 1 omega subunit. When a sigma factor is associated with the core the holoenzyme is formed, which can initiate transcription.

The catalysed reaction is RNA(n) + a ribonucleoside 5'-triphosphate = RNA(n+1) + diphosphate. DNA-dependent RNA polymerase catalyzes the transcription of DNA into RNA using the four ribonucleoside triphosphates as substrates. In Oleidesulfovibrio alaskensis (strain ATCC BAA-1058 / DSM 17464 / G20) (Desulfovibrio alaskensis), this protein is DNA-directed RNA polymerase subunit beta.